A 203-amino-acid polypeptide reads, in one-letter code: Pyrrolidone-carboxylate peptidase (203 aa).

Active-site residues include Glu-78, Cys-141, and His-165.

This sequence belongs to the peptidase C15 family. In terms of assembly, homotetramer.

The protein localises to the cytoplasm. It catalyses the reaction Release of an N-terminal pyroglutamyl group from a polypeptide, the second amino acid generally not being Pro.. Removes 5-oxoproline from various penultimate amino acid residues except L-proline. The protein is Pyrrolidone-carboxylate peptidase of Thermoanaerobacter pseudethanolicus (strain ATCC 33223 / 39E) (Clostridium thermohydrosulfuricum).